The sequence spans 4646 residues: Cytoplasmic dynein 1 heavy chain 1 (4646 aa).

S2 bears the N-acetylserine mark. A stem region spans residues 53–1867 (EAALEEKSAL…SIQMANAKFN (1815 aa)). Position 70 is a phosphoserine (S70). 3 coiled-coil regions span residues 181 to 202 (SVEK…NIEI), 455 to 478 (AHRK…QLRA), and 543 to 566 (TEAW…RITA). Positions 448–703 (MVWRINPAHR…NTQEIFDDWA (256 aa)) are interaction with DYNC1I2. The segment at 651–802 (AKQIDRQLTA…EKVEERNTIS (152 aa)) is interaction with DYNC1LI2. Residue K1125 is modified to N6-acetyllysine. Coiled-coil stretches lie at residues 1171–1252 (TYVQ…AVES) and 1357–1373 (RKLR…LKSF). The residue at position 1230 (S1230) is a Phosphoserine. 4 AAA regions span residues 1868–2099 (YGFE…VLVS), 2180–2452 (EELK…LTRL), 2556–2805 (EVET…WVRG), and 2899–3168 (VFYE…GGRT). ATP-binding positions include 1906 to 1913 (GPAGTGKT) and 2224 to 2231 (GPSGSGKS). The segment at 2390-2411 (GEDEAQRRRKGKEDEGEEAASP) is disordered. ATP contacts are provided by residues 2595–2602 (GPPGSGKT) and 2937–2944 (GVSGAGKT). 3 coiled-coil regions span residues 3189-3275 (EKRS…ADKQ), 3396-3500 (AIAQ…KNQM), and 3737-3800 (EFQL…VSQQ). Residues 3189–3500 (EKRSELEEQQ…KTSETFKNQM (312 aa)) are stalk. K3480 is modified (N6-acetyllysine). AAA stretches follow at residues 3553–3782 (LSNA…EVTR) and 4005–4221 (AHMF…TVDT). S4162 is modified (phosphoserine). An N6-acetyllysine modification is found at K4283. A Phosphothreonine modification is found at T4366. The residue at position 4368 (S4368) is a Phosphoserine.

It belongs to the dynein heavy chain family. Homodimer. The cytoplasmic dynein 1 complex consists of two catalytic heavy chains (HCs) and a number of non-catalytic subunits presented by intermediate chains (ICs), light intermediate chains (LICs) and light chains (LCs); the composition seems to vary in respect to the IC, LIC and LC composition. The heavy chain homodimer serves as a scaffold for the probable homodimeric assembly of the respective non-catalytic subunits. The ICs and LICs bind directly to the HC dimer and dynein LCs assemble on the IC dimer. Interacts with DYNC1LI1; DYNC1LI1 and DYNC1LI2 bind mutually exclusive to DYNC1H1. Interacts with DYNC1LI2; DYNC1LI1 and DYNC1LI2 bind mutually exclusive to DYNC1H1. Interacts with DYNC1I2. Interacts with BICD2. Interacts with isoform 2 of CRACR2A. Interacts with DNALI1.

The protein localises to the cytoplasm. Its subcellular location is the cytoskeleton. Its function is as follows. Cytoplasmic dynein 1 acts as a motor for the intracellular retrograde motility of vesicles and organelles along microtubules. Dynein has ATPase activity; the force-producing power stroke is thought to occur on release of ADP. Plays a role in mitotic spindle assembly and metaphase plate congression. The polypeptide is Cytoplasmic dynein 1 heavy chain 1 (Homo sapiens (Human)).